A 263-amino-acid chain; its full sequence is Small ribosomal subunit protein uS2 (263 aa).

Residues 230–249 (GEALVNEEKEITDEEKKEVL) are compositionally biased toward basic and acidic residues. The tract at residues 230 to 263 (GEALVNEEKEITDEEKKEVLDEAMSEEDFGEEQE) is disordered. Acidic residues predominate over residues 250–263 (DEAMSEEDFGEEQE).

This sequence belongs to the universal ribosomal protein uS2 family.

This chain is Small ribosomal subunit protein uS2, found in Campylobacter jejuni subsp. jejuni serotype O:2 (strain ATCC 700819 / NCTC 11168).